Reading from the N-terminus, the 816-residue chain is Phenylalanine--tRNA ligase beta subunit (816 aa).

A tRNA-binding domain is found at Phe-40 to Ile-148. The B5 domain maps to Lys-401–Thr-479. Residues Asp-457, Asp-463, Glu-466, and Glu-467 each coordinate Mg(2+). Positions Pro-721–Arg-814 constitute an FDX-ACB domain.

Belongs to the phenylalanyl-tRNA synthetase beta subunit family. Type 1 subfamily. Tetramer of two alpha and two beta subunits. Mg(2+) serves as cofactor.

Its subcellular location is the cytoplasm. It catalyses the reaction tRNA(Phe) + L-phenylalanine + ATP = L-phenylalanyl-tRNA(Phe) + AMP + diphosphate + H(+). This chain is Phenylalanine--tRNA ligase beta subunit, found in Desulfotalea psychrophila (strain LSv54 / DSM 12343).